Reading from the N-terminus, the 198-residue chain is Segregation and condensation protein B (198 aa).

It belongs to the ScpB family. Homodimer. Homodimerization may be required to stabilize the binding of ScpA to the Smc head domains. Component of a cohesin-like complex composed of ScpA, ScpB and the Smc homodimer, in which ScpA and ScpB bind to the head domain of Smc. The presence of the three proteins is required for the association of the complex with DNA.

It is found in the cytoplasm. Functionally, participates in chromosomal partition during cell division. May act via the formation of a condensin-like complex containing Smc and ScpA that pull DNA away from mid-cell into both cell halves. The chain is Segregation and condensation protein B from Acetivibrio thermocellus (strain ATCC 27405 / DSM 1237 / JCM 9322 / NBRC 103400 / NCIMB 10682 / NRRL B-4536 / VPI 7372) (Clostridium thermocellum).